A 72-amino-acid polypeptide reads, in one-letter code: Translation initiation factor IF-1 1 (72 aa).

The region spanning 1–72 is the S1-like domain; sequence MSKDDVIQMQ…TRARIVFRSK (72 aa).

It belongs to the IF-1 family. Component of the 30S ribosomal translation pre-initiation complex which assembles on the 30S ribosome in the order IF-2 and IF-3, IF-1 and N-formylmethionyl-tRNA(fMet); mRNA recruitment can occur at any time during PIC assembly.

It localises to the cytoplasm. Functionally, one of the essential components for the initiation of protein synthesis. Stabilizes the binding of IF-2 and IF-3 on the 30S subunit to which N-formylmethionyl-tRNA(fMet) subsequently binds. Helps modulate mRNA selection, yielding the 30S pre-initiation complex (PIC). Upon addition of the 50S ribosomal subunit IF-1, IF-2 and IF-3 are released leaving the mature 70S translation initiation complex. The sequence is that of Translation initiation factor IF-1 1 from Bordetella avium (strain 197N).